A 115-amino-acid chain; its full sequence is Large ribosomal subunit protein bL20 (115 aa).

This sequence belongs to the bacterial ribosomal protein bL20 family.

Its function is as follows. Binds directly to 23S ribosomal RNA and is necessary for the in vitro assembly process of the 50S ribosomal subunit. It is not involved in the protein synthesizing functions of that subunit. The sequence is that of Large ribosomal subunit protein bL20 from Prochlorococcus marinus (strain MIT 9313).